The sequence spans 182 residues: MGKEVFLLDDQGIKRALTRIAHEIIEKNKGAKDIILVGIRTRGVPLAKRLAQRIDQIEGEIVPVGMLDITLYRDDLTKDENDPIVHGSSIDSEINDKIVILVDDVLYTGRTARAALDALVDLGRPKMVQLAVLIDRGHRELPIRADYVGKNVPTSKEEIVRVSLMEIDKKDSVMLEGSKNVV.

The PRPP-binding signature appears at 99-111 (VILVDDVLYTGRT).

The protein belongs to the purine/pyrimidine phosphoribosyltransferase family. PyrR subfamily. As to quaternary structure, homodimer and homohexamer; in equilibrium.

The catalysed reaction is UMP + diphosphate = 5-phospho-alpha-D-ribose 1-diphosphate + uracil. Its function is as follows. Regulates transcriptional attenuation of the pyrimidine nucleotide (pyr) operon by binding in a uridine-dependent manner to specific sites on pyr mRNA. This disrupts an antiterminator hairpin in the RNA and favors formation of a downstream transcription terminator, leading to a reduced expression of downstream genes. Also displays a weak uracil phosphoribosyltransferase activity which is not physiologically significant. The sequence is that of Bifunctional protein PyrR from Alkaliphilus metalliredigens (strain QYMF).